The following is a 174-amino-acid chain: Adenylate kinase (174 aa).

The tract at residues serine 12–valine 41 is NMP. AMP-binding positions include threonine 13, arginine 18, glycine 39–valine 41, glycine 67–arginine 70, and glutamine 74. An LID region spans residues glycine 104 to aspartate 141. Residues arginine 105 and threonine 114 to tyrosine 115 contribute to the ATP site. AMP-binding residues include arginine 138 and arginine 149.

Belongs to the adenylate kinase family. In terms of assembly, monomer.

Its subcellular location is the cytoplasm. It catalyses the reaction AMP + ATP = 2 ADP. Its pathway is purine metabolism; AMP biosynthesis via salvage pathway; AMP from ADP: step 1/1. In terms of biological role, catalyzes the reversible transfer of the terminal phosphate group between ATP and AMP. Plays an important role in cellular energy homeostasis and in adenine nucleotide metabolism. The protein is Adenylate kinase of Neisseria polysaccharea.